The following is a 624-amino-acid chain: Phosphatidylinositol 4-kinase lsb6 (624 aa).

Over residues 1-31 (MESTFHSDTLDSFPNYQENSLNTNEEQTNPL) the composition is skewed to polar residues. The disordered stretch occupies residues 1–53 (MESTFHSDTLDSFPNYQENSLNTNEEQTNPLESLRDGWASSNSSSSSSLLLPD). The segment covering 40-51 (SSNSSSSSSLLL) has biased composition (low complexity). Residues 145 to 520 (GVFPVLISKG…LLELPNLYVV (376 aa)) form the PI3K/PI4K catalytic domain. The interval 151 to 157 (ISKGSSG) is G-loop. The catalytic loop stretch occupies residues 346–354 (RNTDRNLDN). The activation loop stretch occupies residues 409-429 (AIDNSLAFPYKHPDSWRSFPY).

Belongs to the PI3/PI4-kinase family. Requires Mg(2+) as cofactor. It depends on Mn(2+) as a cofactor.

Its subcellular location is the cell membrane. It localises to the vacuole membrane. The protein resides in the golgi apparatus membrane. It catalyses the reaction a 1,2-diacyl-sn-glycero-3-phospho-(1D-myo-inositol) + ATP = a 1,2-diacyl-sn-glycero-3-phospho-(1D-myo-inositol 4-phosphate) + ADP + H(+). Functionally, may play a role in endocytic and/or exocytic pathways. This chain is Phosphatidylinositol 4-kinase lsb6 (lsb6), found in Schizosaccharomyces pombe (strain 972 / ATCC 24843) (Fission yeast).